Here is a 434-residue protein sequence, read N- to C-terminus: Nicotinate phosphoribosyltransferase (434 aa).

Position 242 is a phosphohistidine; by autocatalysis (histidine 242).

It belongs to the NAPRTase family. In terms of processing, transiently phosphorylated on a His residue during the reaction cycle. Phosphorylation strongly increases the affinity for substrates and increases the rate of nicotinate D-ribonucleotide production. Dephosphorylation regenerates the low-affinity form of the enzyme, leading to product release.

It carries out the reaction nicotinate + 5-phospho-alpha-D-ribose 1-diphosphate + ATP + H2O = nicotinate beta-D-ribonucleotide + ADP + phosphate + diphosphate. Its pathway is cofactor biosynthesis; NAD(+) biosynthesis; nicotinate D-ribonucleotide from nicotinate: step 1/1. Catalyzes the synthesis of beta-nicotinate D-ribonucleotide from nicotinate and 5-phospho-D-ribose 1-phosphate at the expense of ATP. This is Nicotinate phosphoribosyltransferase from Brucella anthropi (strain ATCC 49188 / DSM 6882 / CCUG 24695 / JCM 21032 / LMG 3331 / NBRC 15819 / NCTC 12168 / Alc 37) (Ochrobactrum anthropi).